The sequence spans 685 residues: Delta-like protein 4 (685 aa).

Residues 1–26 form the signal peptide; that stretch reads MAAASRSASGWALLLLVALWQQRAAG. Topologically, residues 27-529 are extracellular; it reads SGVFQLQLQE…PVGLPPSFPW (503 aa). Disulfide bonds link C50/C54 and C61/C74. Residues N108 and N183 are each glycosylated (N-linked (GlcNAc...) asparagine). Residues 173 to 217 enclose the DSL domain; the sequence is VICSDNYYGDNCSRLCKKRNDHFGHYVCQPDGNLSCLPGWTGEYC. C175 and C184 form a disulfide bridge. 2 interaction with Notch1 regions span residues 185 to 187 and 191 to 195; these read SRL and RNDHF. C188 and C200 are disulfide-bonded. N-linked (GlcNAc...) asparagine glycosylation is present at N205. Cystine bridges form between C208–C217, C222–C233, C226–C239, C241–C250, C253–C264, C259–C270, C272–C281, C288–C300, C294–C310, C312–C321, C328–C339, C333–C348, C350–C359, C366–C377, C371–C388, C390–C399, C406–C417, C411–C426, C428–C437, C444–C455, C449–C464, C466–C475, C484–C495, C489–C506, and C508–C517. 8 EGF-like domains span residues 218–251, 252–282, 284–322, 324–360, 362–400, 402–438, 440–476, and 480–518; these read QQPI…RLCN, ECIP…LFCD, DLNY…VDCE, ELSE…LHCE, STLS…SNCE, KVDR…TYCE, HVSD…RRCE, and SIDA…SRCE. An N-linked (GlcNAc...) asparagine glycan is attached at N393. A helical membrane pass occupies residues 530–550; the sequence is VAVSLGVGLAVLLVLLGMVAV. Residues 551–685 are Cytoplasmic-facing; that stretch reads AVRQLRLRRP…RNECVIATEV (135 aa).

As to quaternary structure, interacts with NOTCH4. Interacts (via N-terminal DSL and MNNL domains) with NOTCH1 (via EGF-like domains). As to expression, expressed in vascular endothelium.

It localises to the cell membrane. Involved in the Notch signaling pathway as Notch ligand. Activates NOTCH1 and NOTCH4. Involved in angiogenesis; negatively regulates endothelial cell proliferation and migration and angiogenic sprouting. Essential for retinal progenitor proliferation. Required for suppressing rod fates in late retinal progenitors as well as for proper generation of other retinal cell types. During spinal cord neurogenesis, inhibits V2a interneuron fate. The chain is Delta-like protein 4 (DLL4) from Homo sapiens (Human).